Reading from the N-terminus, the 293-residue chain is 4-hydroxy-tetrahydrodipicolinate synthase (293 aa).

Thr47 is a binding site for pyruvate. Tyr136 functions as the Proton donor/acceptor in the catalytic mechanism. Lys164 serves as the catalytic Schiff-base intermediate with substrate. Position 206 (Ile206) interacts with pyruvate.

This sequence belongs to the DapA family. Homotetramer; dimer of dimers.

The protein localises to the cytoplasm. The enzyme catalyses L-aspartate 4-semialdehyde + pyruvate = (2S,4S)-4-hydroxy-2,3,4,5-tetrahydrodipicolinate + H2O + H(+). It functions in the pathway amino-acid biosynthesis; L-lysine biosynthesis via DAP pathway; (S)-tetrahydrodipicolinate from L-aspartate: step 3/4. Functionally, catalyzes the condensation of (S)-aspartate-beta-semialdehyde [(S)-ASA] and pyruvate to 4-hydroxy-tetrahydrodipicolinate (HTPA). This chain is 4-hydroxy-tetrahydrodipicolinate synthase, found in Listeria monocytogenes serovar 1/2a (strain ATCC BAA-679 / EGD-e).